The chain runs to 225 residues: Ribonuclease HII (225 aa).

The RNase H type-2 domain maps to glycine 35–aspartate 225. A divalent metal cation-binding residues include aspartate 41, glutamate 42, and aspartate 137.

Belongs to the RNase HII family. Requires Mn(2+) as cofactor. Mg(2+) is required as a cofactor.

The protein resides in the cytoplasm. The catalysed reaction is Endonucleolytic cleavage to 5'-phosphomonoester.. Its function is as follows. Endonuclease that specifically degrades the RNA of RNA-DNA hybrids. The polypeptide is Ribonuclease HII (Trichormus variabilis (strain ATCC 29413 / PCC 7937) (Anabaena variabilis)).